A 183-amino-acid polypeptide reads, in one-letter code: Seminal plasma protein BSP-30 kDa (183 aa).

The N-terminal stretch at 1–25 (MAPLVGLFLIWAGASVFQQLHPVNG) is a signal peptide. Residues 23-47 (VNGGDIPDPGSKPTPPGMADELPTE) form a disordered region. 6 O-linked (GalNAc...) threonine glycosylation sites follow: Thr36, Thr46, Thr57, Thr58, Thr59, and Thr64. Fibronectin type-II domains lie at 92–136 (FEGP…FCTE) and 137–183 (RDEP…WKYC). Intrachain disulfides connect Cys97-Cys121, Cys111-Cys134, Cys142-Cys168, and Cys156-Cys183.

It belongs to the seminal plasma protein family.

It is found in the secreted. Binds to spermatozoa upon ejaculation and may play a role in sperm capacitation. Displays heparin-, gelatin- and phospholipid-binding activities. The chain is Seminal plasma protein BSP-30 kDa from Bos taurus (Bovine).